The following is a 126-amino-acid chain: Large ribosomal subunit protein bL17 (126 aa).

The protein belongs to the bacterial ribosomal protein bL17 family. As to quaternary structure, part of the 50S ribosomal subunit. Contacts protein L32.

This Vibrio parahaemolyticus serotype O3:K6 (strain RIMD 2210633) protein is Large ribosomal subunit protein bL17.